An 89-amino-acid polypeptide reads, in one-letter code: Mu-theraphotoxin-Phlo1a (89 aa).

The N-terminal stretch at 1-22 (MKVSVLITLAVLGVMFVWTSAA) is a signal peptide. Positions 23 to 52 (EQEDHGSDRRDSPALLKNLLGEEVFQSEER) are excised as a propeptide. 3 disulfides stabilise this stretch: Cys-54/Cys-68, Cys-61/Cys-73, and Cys-67/Cys-81. Ile-87 carries the post-translational modification Isoleucine amide.

This sequence belongs to the neurotoxin 10 (Hwtx-1) family. 39 (Jztx-34) subfamily. Expressed by the venom gland.

Its subcellular location is the secreted. Functionally, gating-modifier toxin that inhibits voltage-gated sodium channel Nav by shifting the threshold for channel activation to more positive potentials. This toxin moderately inhibits human Nav1.7/SCN9A (IC(50)=459 nM) and weakly inhibits hNav1.2/SCN2A and hNav1.5/SCN5A (&lt;20% inhibition at 1 uM peptide). Inhibition of Nav1.7 is voltage-dependent, with lower inhibition at more positive test pulses. The sequence is that of Mu-theraphotoxin-Phlo1a from Phlogius sp. (Tarantula spider).